A 130-amino-acid chain; its full sequence is Large ribosomal subunit protein bL12 (130 aa).

Positions 94-114 (MTEGLPKTVKEKTSKSDAEDT) are disordered.

The protein belongs to the bacterial ribosomal protein bL12 family. As to quaternary structure, homodimer. Part of the ribosomal stalk of the 50S ribosomal subunit. Forms a multimeric L10(L12)X complex, where L10 forms an elongated spine to which 2 to 4 L12 dimers bind in a sequential fashion. Binds GTP-bound translation factors.

Forms part of the ribosomal stalk which helps the ribosome interact with GTP-bound translation factors. Is thus essential for accurate translation. This is Large ribosomal subunit protein bL12 from Chlamydia caviae (strain ATCC VR-813 / DSM 19441 / 03DC25 / GPIC) (Chlamydophila caviae).